The chain runs to 483 residues: UDP-N-acetylmuramate--L-alanine ligase (483 aa).

ATP is bound at residue 112–118 (GTHGKTT).

This sequence belongs to the MurCDEF family.

It localises to the cytoplasm. It catalyses the reaction UDP-N-acetyl-alpha-D-muramate + L-alanine + ATP = UDP-N-acetyl-alpha-D-muramoyl-L-alanine + ADP + phosphate + H(+). The protein operates within cell wall biogenesis; peptidoglycan biosynthesis. Cell wall formation. This Ralstonia nicotianae (strain ATCC BAA-1114 / GMI1000) (Ralstonia solanacearum) protein is UDP-N-acetylmuramate--L-alanine ligase.